Reading from the N-terminus, the 138-residue chain is Transcription antitermination protein NusB (138 aa).

This sequence belongs to the NusB family.

Its function is as follows. Involved in transcription antitermination. Required for transcription of ribosomal RNA (rRNA) genes. Binds specifically to the boxA antiterminator sequence of the ribosomal RNA (rrn) operons. The sequence is that of Transcription antitermination protein NusB from Helicobacter pylori (strain P12).